Consider the following 329-residue polypeptide: Glutamyl-tRNA reductase (329 aa).

Substrate-binding positions include Thr51–Arg54, Ser99, Glu104–Gln106, and Gln110. Cys52 acts as the Nucleophile in catalysis. Gly179–Ala184 is a binding site for NADP(+).

It belongs to the glutamyl-tRNA reductase family. In terms of assembly, homodimer.

The enzyme catalyses (S)-4-amino-5-oxopentanoate + tRNA(Glu) + NADP(+) = L-glutamyl-tRNA(Glu) + NADPH + H(+). Its pathway is porphyrin-containing compound metabolism; protoporphyrin-IX biosynthesis; 5-aminolevulinate from L-glutamyl-tRNA(Glu): step 1/2. In terms of biological role, catalyzes the NADPH-dependent reduction of glutamyl-tRNA(Glu) to glutamate 1-semialdehyde (GSA). This is Glutamyl-tRNA reductase from Fusobacterium nucleatum subsp. nucleatum (strain ATCC 25586 / DSM 15643 / BCRC 10681 / CIP 101130 / JCM 8532 / KCTC 2640 / LMG 13131 / VPI 4355).